Reading from the N-terminus, the 362-residue chain is Probable dual-specificity RNA methyltransferase RlmN (362 aa).

Glutamate 105 serves as the catalytic Proton acceptor. The 234-residue stretch at 111–344 (HEYGNSICVT…VTIRREQGHD (234 aa)) folds into the Radical SAM core domain. An intrachain disulfide couples cysteine 118 to cysteine 349. Residues cysteine 125, cysteine 129, and cysteine 132 each coordinate [4Fe-4S] cluster. Residues 175 to 176 (GE), serine 207, 230 to 232 (SLH), and asparagine 306 contribute to the S-adenosyl-L-methionine site. The S-methylcysteine intermediate role is filled by cysteine 349.

Belongs to the radical SAM superfamily. RlmN family. It depends on [4Fe-4S] cluster as a cofactor.

The protein localises to the cytoplasm. It carries out the reaction adenosine(2503) in 23S rRNA + 2 reduced [2Fe-2S]-[ferredoxin] + 2 S-adenosyl-L-methionine = 2-methyladenosine(2503) in 23S rRNA + 5'-deoxyadenosine + L-methionine + 2 oxidized [2Fe-2S]-[ferredoxin] + S-adenosyl-L-homocysteine. The enzyme catalyses adenosine(37) in tRNA + 2 reduced [2Fe-2S]-[ferredoxin] + 2 S-adenosyl-L-methionine = 2-methyladenosine(37) in tRNA + 5'-deoxyadenosine + L-methionine + 2 oxidized [2Fe-2S]-[ferredoxin] + S-adenosyl-L-homocysteine. Functionally, specifically methylates position 2 of adenine 2503 in 23S rRNA and position 2 of adenine 37 in tRNAs. This is Probable dual-specificity RNA methyltransferase RlmN from Bacillus cytotoxicus (strain DSM 22905 / CIP 110041 / 391-98 / NVH 391-98).